The sequence spans 150 residues: Ribonuclease H (150 aa).

An RNase H type-1 domain is found at Pro2–Glu143. 4 residues coordinate Mg(2+): Asp11, Glu49, Asp71, and Asp135.

This sequence belongs to the RNase H family. Monomer. Requires Mg(2+) as cofactor.

It is found in the cytoplasm. The catalysed reaction is Endonucleolytic cleavage to 5'-phosphomonoester.. Endonuclease that specifically degrades the RNA of RNA-DNA hybrids. The polypeptide is Ribonuclease H (Dichelobacter nodosus (strain VCS1703A)).